A 237-amino-acid chain; its full sequence is Tetraspanin-8 (237 aa).

Topologically, residues 1 to 9 (MAGVSACIK) are cytoplasmic. Residues 10 to 33 (YSMFTFNFLFWLCGILILALAIWV) form a helical membrane-spanning segment. The Extracellular segment spans residues 34–57 (RVSNDSQAIFGSEDVGSSSYVAVD). The helical transmembrane segment at 58 to 72 (ILIAVGAIIMILGFL) threads the bilayer. The Cytoplasmic segment spans residues 73–83 (GCCGAIKESRC). Residues 84–109 (MLLLFFIGLLLILLLQVATGILGAVF) traverse the membrane as a helical segment. Residues 110–205 (KSKSDRIVNE…SFIKDFLAKN (96 aa)) are Extracellular-facing. A glycan (N-linked (GlcNAc...) asparagine) is linked at Asn-118. The chain crosses the membrane as a helical span at residues 206–230 (LIIVIGISFGLAVIEILGLVFSMVL). Residues 231–237 (YCQIGNK) lie on the Cytoplasmic side of the membrane.

Belongs to the tetraspanin (TM4SF) family. In terms of assembly, forms homooligomers. Interacts with MEP1B. Interacts with integrin alpha3/ITGA3. Interacts with RICTOR and MTOR. Interacts with ADAM17. Interacts with ECE1. In terms of tissue distribution, gastric, colon, rectal, and pancreatic carcinomas.

It is found in the cell membrane. Functionally, structural component of specialized membrane microdomains known as tetraspanin-enriched microdomains (TERMs), which act as platforms for receptor clustering and signaling. Participates thereby in diverse biological functions such as cell signal transduction, migration and protein trafficking. Promotes ADAM17-mediated TNF-alpha processing through recruitment of ADAM17 to tetraspanin-enriched micro-domains (TEMs). Forms a complex with RICTOR and integrin alpha3/ITGA3 to mediate mTORC2 activation and AKT1 phosphorylation leading to cell migration. Reduces apoptosis and autophagy induced by high glucose levels through forming a complex with mTOR and RICTOR. Contributes to the maintenance of intestinal epithelial barrier and plays a role in the regulation of intestine inflammation by switching interferon gamma receptor 1/IFNGR1 from clathrin-dependent to lipid raft-dependent endocytosis route to limit STAT1 activation magnitude and duration. Acts as a modulator of the endothelin axis by associating with endothelin converting enzyme ECE1 and regulating its activity of conversion of the endothelin-1 precursor to endothelin. This is Tetraspanin-8 (TSPAN8) from Homo sapiens (Human).